We begin with the raw amino-acid sequence, 222 residues long: MNKKVIAIVVGVVVVLVAILGVVAWFVPILKVGNIEVTGATRTDPDQVLEVSGIVEGENLFRVDATAAGQNIVELPWVKSVTVNRALPSTITVELTEREPAVFIKRADGDHVIDTEGKEIIIGTPPVGTVEVSGADEGNSEVLPAVIAVINAIKAQDAQMTESIQVVEAPDQFDILLKMNDGREIYWGSSENNHDKAVAMSTVLKREGQRWNISSPSMVTVR.

The Cytoplasmic segment spans residues 1 to 5 (MNKKV). A helical membrane pass occupies residues 6 to 26 (IAIVVGVVVVLVAILGVVAWF). Residues 27–222 (VPILKVGNIE…ISSPSMVTVR (196 aa)) lie on the Extracellular side of the membrane. A POTRA domain is found at 30–98 (LKVGNIEVTG…STITVELTER (69 aa)).

The protein belongs to the FtsQ/DivIB family. FtsQ subfamily.

The protein localises to the cell membrane. In terms of biological role, essential cell division protein. The protein is Cell division protein FtsQ of Corynebacterium glutamicum (strain ATCC 13032 / DSM 20300 / JCM 1318 / BCRC 11384 / CCUG 27702 / LMG 3730 / NBRC 12168 / NCIMB 10025 / NRRL B-2784 / 534).